Consider the following 376-residue polypeptide: Zinc transporter 7 (376 aa).

Over 1 to 37 the chain is Cytoplasmic; that stretch reads MLPLSIKDDEYKPPKFNLFGKISGWFRSILSDKTSRN. A helical transmembrane segment spans residues 38–58; that stretch reads LFFFLCLNLSFAFVELLYGIW. The Lumenal segment spans residues 59 to 67; sequence SNCLGLISD. A helical membrane pass occupies residues 68–88; that stretch reads SFHMFFDSTAILAGLAASVIS. Residues 89–102 are Cytoplasmic-facing; the sequence is KWRDNDAFSYGYVR. The helical transmembrane segment at 103–123 threads the bilayer; that stretch reads AEVLAGFVNGLFLIFTAFFIF. Residues 124 to 140 lie on the Lumenal side of the membrane; it reads SEGVERALAPPDVHHER. Residues 141–161 form a helical membrane-spanning segment; sequence LLLVSILGFVVNLIGIFVFKH. Residues 161–218 are his-rich loop; that stretch reads HGGHGHSHGSGHGHSHSLFNGALDQAHGHVDHCHSHEVKHGAAHSHDHAHGHGHFHSH. The Cytoplasmic segment spans residues 162 to 236; the sequence is GGHGHSHGSG…TGPSRQILQG (75 aa). Residues 194-222 are compositionally biased toward basic and acidic residues; that stretch reads HSHEVKHGAAHSHDHAHGHGHFHSHDGPS. Residues 194-226 are disordered; it reads HSHEVKHGAAHSHDHAHGHGHFHSHDGPSLKET. The chain crosses the membrane as a helical span at residues 237-257; that stretch reads VFLHILADTLGSIGVIASAIM. The Lumenal segment spans residues 258–262; sequence MQNFG. The chain crosses the membrane as a helical span at residues 263–283; the sequence is LMIADPICSILIAILIVVSVI. At 284 to 376 the chain is on the cytoplasmic side; the sequence is PLLRESVGIL…LYVQIDFAAM (93 aa).

It belongs to the cation diffusion facilitator (CDF) transporter (TC 2.A.4) family. SLC30A subfamily. As to quaternary structure, homooligomer. As to expression, highly expressed in megakaryocytes and other bone marrow cells and in the epithelium of the small intestine. Expressed in testis (in Leydig cells), adrenal gland (in adrenal medula, zona fasciculata and zona of reticularis), and pituitary gland (in somatotropic cells).

Its subcellular location is the golgi apparatus membrane. It localises to the cytoplasmic vesicle. It is found in the golgi apparatus. The protein resides in the trans-Golgi network. The protein localises to the sarcoplasmic reticulum. Its subcellular location is the mitochondrion. The enzyme catalyses Zn(2+)(in) = Zn(2+)(out). Zinc ion transporter mediating zinc entry from the cytosol into the lumen of organelles along the secretory pathway. By contributing to zinc ion homeostasis within the early secretory pathway, regulates the activation and folding of enzymes like alkaline phosphatases. This Homo sapiens (Human) protein is Zinc transporter 7.